The primary structure comprises 327 residues: uncharacterized protein (327 aa).

Disordered stretches follow at residues 127 to 170 and 298 to 327; these read LSEF…GIYR and NFEDVNDGSLASPVQIGQSYRKRKKNLKRR. Ser-153, Ser-154, and Ser-309 each carry phosphoserine. Positions 317–327 are enriched in basic residues; it reads YRKRKKNLKRR.

This is an uncharacterized protein from Schizosaccharomyces pombe (strain 972 / ATCC 24843) (Fission yeast).